A 210-amino-acid chain; its full sequence is Small ribosomal subunit protein uS7 (210 aa).

This sequence belongs to the universal ribosomal protein uS7 family.

This Podocoryna carnea (Hydrozoan) protein is Small ribosomal subunit protein uS7 (RPS5).